The primary structure comprises 184 residues: uncharacterized protein (184 aa).

The protein belongs to the TorD/DmsD family.

This is an uncharacterized protein from Haemophilus influenzae (strain ATCC 51907 / DSM 11121 / KW20 / Rd).